The chain runs to 1325 residues: Zinc finger MYM-type protein 6 (1325 aa).

MYM-type zinc fingers lie at residues 113 to 151 (QLFC…PKDV), 163 to 206 (KDFC…RFEV), 213 to 248 (HGLC…SSGP), 296 to 334 (ELFC…QYHL), 342 to 443 (YSFC…KPEL), 451 to 485 (FLFC…KETV), 492 to 531 (KPFC…LVEN), and 538 to 572 (EEFC…SESI). The residue at position 397 (serine 397) is a Phosphoserine. The disordered stretch occupies residues 665–733 (ESTQEDAMKF…NDAELDSPPS (69 aa)). The span at 695–706 (PVTQTKATSCKP) shows a compositional bias: polar residues.

As to expression, expressed at high levels in heart, skeletal muscle, kidney and liver.

It localises to the nucleus. In terms of biological role, plays a role in the regulation of cell morphology and cytoskeletal organization. The sequence is that of Zinc finger MYM-type protein 6 (ZMYM6) from Homo sapiens (Human).